We begin with the raw amino-acid sequence, 262 residues long: Inactive snake venom serine proteinase 13 (262 aa).

Residues Met1–Ala18 form the signal peptide. The propeptide occupies Gln19–Leu24. The region spanning Val25–Ala250 is the Peptidase S1 domain. 6 cysteine pairs are disulfide-bonded: Cys31–Cys162, Cys49–Cys65, Cys97–Cys257, Cys141–Cys211, Cys173–Cys190, and Cys201–Cys226. Residues Asn78, Asn102, and Asn153 are each glycosylated (N-linked (GlcNAc...) asparagine).

The protein belongs to the peptidase S1 family. Snake venom subfamily. Monomer. As to expression, expressed by the venom gland.

The protein resides in the secreted. The chain is Inactive snake venom serine proteinase 13 from Crotalus adamanteus (Eastern diamondback rattlesnake).